The sequence spans 1157 residues: DNA-directed RNA polymerase subunit beta (1157 aa).

The protein belongs to the RNA polymerase beta chain family. In terms of assembly, the RNAP catalytic core consists of 2 alpha, 1 beta, 1 beta' and 1 omega subunit. When a sigma factor is associated with the core the holoenzyme is formed, which can initiate transcription.

It catalyses the reaction RNA(n) + a ribonucleoside 5'-triphosphate = RNA(n+1) + diphosphate. Its function is as follows. DNA-dependent RNA polymerase catalyzes the transcription of DNA into RNA using the four ribonucleoside triphosphates as substrates. The chain is DNA-directed RNA polymerase subunit beta from Tropheryma whipplei (strain TW08/27) (Whipple's bacillus).